A 171-amino-acid chain; its full sequence is Putative rhomboid protein L523 (171 aa).

4 consecutive transmembrane segments (helical) span residues 3-23 (YVTY…LNFF), 67-87 (FAFC…AEHT), 94-114 (VYTV…LMSL), and 119-139 (GLSI…SGIS). Ser100 acts as the Nucleophile in catalysis. The active site involves His143. A helical transmembrane segment spans residues 144-164 (ICGMIAGFVYVVLFPLPKGSV).

This sequence belongs to the peptidase S54 family.

It localises to the membrane. Functionally, probable serine protease. This is Putative rhomboid protein L523 from Acanthamoeba polyphaga mimivirus (APMV).